An 84-amino-acid chain; its full sequence is Agaphelin (84 aa).

The N-terminal stretch at 1–26 (MKMRVHLLAVSVLLVVLALQTTPAEA) is a signal peptide. One can recognise a Kazal-like domain in the interval 29 to 82 (NSEMATCACQLIYRPVCASNNESYSNECVLKCASETPTGRSIGLHKVKDGNCNG). Disulfide bonds link Cys35–Cys60, Cys37–Cys56, and Cys45–Cys80. N-linked (GlcNAc...) asparagine glycosylation is present at Asn49.

Interacts with human ELANE.

Its subcellular location is the secreted. Functions as a slow and tight inhibitor of host neutrophil elastase (ELANE). Inhibits host proteinase 3 (PRTN3) and chymotrypsin. Does not inhibit other host proteases involved in coagulation or inflammation, such as cathepsin G (CTSG), trypsin, chymase, matriptase, beta-tryptase, kallikrein, urokinase-type plasminogen activator (PLAU), coagulation factors Xa (F10), XIa (F11), XIIa (F12), plasmin (PLG), thrombin (F2) and tissue-type plasminogen activator (PLAT). Inhibits host neutrophil chemotaxis induced by N-formylmethionine-leucyl-phenylalanine (fMLP) in vitro. Inhibits ELANE-mediated potentiation of platelet aggregation induced by CTSG in the host. Does not affect CTSG- or collagen-induced platelet aggregation. Blocks cleavage of tissue factor pathway inhibitor (TFPI) by ELANE in the host. Inhibits neutrophil-induced coagulation in the host by interfering with neutrophil extracellular traps (NET) formation. Exhibits anti-inflammatory activity. Reduces ischemia-induced activation of MAPK and NF-kappa-B pathways in the host. Decreases CCL2 and IL8 production in IL4- or lipopolysaccharide (LPS)-stimulated host epithelial cells. Reduces caspase-3 (CASP3)-dependent apoptosis in damaged host tissues. The chain is Agaphelin from Anopheles gambiae (African malaria mosquito).